The following is a 164-amino-acid chain: Phosphohistidine phosphatase SixA homolog (164 aa).

It belongs to the SixA phosphatase family.

The sequence is that of Phosphohistidine phosphatase SixA homolog (sixA-A) from Haemophilus influenzae (strain ATCC 51907 / DSM 11121 / KW20 / Rd).